Consider the following 314-residue polypeptide: Putative lipoprotein LppW (314 aa).

The N-terminal stretch at 1-22 (MRARPLTLLTALAAVTLVVVAG) is a signal peptide. Residue Cys23 is the site of N-palmitoyl cysteine attachment. Cys23 carries S-diacylglycerol cysteine lipidation.

The protein localises to the cell membrane. This chain is Putative lipoprotein LppW (lppW), found in Mycobacterium bovis (strain ATCC BAA-935 / AF2122/97).